Here is a 141-residue protein sequence, read N- to C-terminus: ATP synthase epsilon chain (141 aa).

The protein belongs to the ATPase epsilon chain family. As to quaternary structure, F-type ATPases have 2 components, CF(1) - the catalytic core - and CF(0) - the membrane proton channel. CF(1) has five subunits: alpha(3), beta(3), gamma(1), delta(1), epsilon(1). CF(0) has three main subunits: a, b and c.

The protein resides in the cell inner membrane. Functionally, produces ATP from ADP in the presence of a proton gradient across the membrane. This Acidithiobacillus ferridurans protein is ATP synthase epsilon chain (atpC).